The sequence spans 582 residues: Urocanate reductase (582 aa).

Residues 1 to 20 (MHYKKSIIGIAVTATAIIAG) form the signal peptide. The N-palmitoyl cysteine moiety is linked to residue Cys-21. Cys-21 carries S-diacylglycerol cysteine lipidation. Residue Thr-93 is modified to FMN phosphoryl threonine. Residues Ala-143, Glu-162, Asn-170, Ser-171, Gly-175, Ala-176, Ala-285, and Asp-352 each contribute to the FAD site. The Proton donor role is filled by Arg-411. Residues His-521, Glu-550, and Ala-565 each coordinate FAD.

The protein belongs to the FAD-dependent oxidoreductase 2 family. FRD/SDH subfamily. It depends on FAD as a cofactor. FMN is required as a cofactor.

It localises to the cell membrane. The catalysed reaction is dihydrourocanate + A = urocanate + AH2. Functionally, catalyzes the two-electron reduction of urocanate to dihydrourocanate (also named imidazole propionate or deamino-histidine). The physiological electron donor is unknown; it might be the membrane-bound tetraheme cytochrome c (CymA). Enables anaerobic growth with urocanate as a sole terminal electron acceptor, and thus can provide the cells with a niche where no other bacteria can compete and survive. Is unable to reduce cinnamate and other unsaturated organic acids such as acrylic, crotonic, fumaric and orotic acids. Has no fumarate reductase or succinate dehydrogenase activity. The protein is Urocanate reductase (urdA) of Shewanella oneidensis (strain ATCC 700550 / JCM 31522 / CIP 106686 / LMG 19005 / NCIMB 14063 / MR-1).